The sequence spans 98 residues: Protein E7 (98 aa).

The segment at Met-1 to Ser-40 is E7 terminal domain. The short motif at Leu-22–Glu-26 is the LXCXE motif; interaction with host RB1 and TMEM173/STING element. The segment at Cys-58–Cys-94 is a zinc-finger region. The Nuclear export signal motif lies at Ile-76–Met-84.

It belongs to the papillomaviridae E7 protein family. As to quaternary structure, homodimer. Homooligomer. Interacts with host RB1; this interaction induces dissociation of RB1-E2F1 complex thereby disrupting RB1 activity. Interacts with host EP300; this interaction represses EP300 transcriptional activity. Interacts with protein E2; this interaction inhibits E7 oncogenic activity. Interacts with host TMEM173/STING; this interaction impairs the ability of TMEM173/STING to sense cytosolic DNA and promote the production of type I interferon (IFN-alpha and IFN-beta). In terms of processing, highly phosphorylated.

The protein resides in the host cytoplasm. It localises to the host nucleus. In terms of biological role, E7 protein has both transforming and trans-activating activities. Disrupts the function of host retinoblastoma protein RB1/pRb, which is a key regulator of the cell cycle. Induces the disassembly of the E2F1 transcription factors from RB1, with subsequent transcriptional activation of E2F1-regulated S-phase genes. Inactivation of the ability of RB1 to arrest the cell cycle is critical for cellular transformation, uncontrolled cellular growth and proliferation induced by viral infection. Stimulation of progression from G1 to S phase allows the virus to efficiently use the cellular DNA replicating machinery to achieve viral genome replication. Interferes with histone deacetylation mediated by HDAC1 and HDAC2, leading to activation of transcription. Its function is as follows. Plays a role in viral genome replication by driving entry of quiescent cells into the cell cycle. Stimulation of progression from G1 to S phase allows the virus to efficiently use the cellular DNA replicating machinery to achieve viral genome replication. E7 protein has both transforming and trans-activating activities. Induces the disassembly of the E2F1 transcription factor from RB1, with subsequent transcriptional activation of E2F1-regulated S-phase genes. Interferes with host histone deacetylation mediated by HDAC1 and HDAC2, leading to transcription activation. Also plays a role in the inhibition of both antiviral and antiproliferative functions of host interferon alpha. Interaction with host TMEM173/STING impairs the ability of TMEM173/STING to sense cytosolic DNA and promote the production of type I interferon (IFN-alpha and IFN-beta). The polypeptide is Protein E7 (Homo sapiens (Human)).